Reading from the N-terminus, the 155-residue chain is Immunoglobulin domain-containing protein oig-4 (155 aa).

Positions 1-22 (MSFRLWGRCIFFFCFLLEAIDS) are cleaved as a signal peptide. N-linked (GlcNAc...) asparagine glycosylation is found at asparagine 55 and asparagine 114. Residues 73-154 (GYKLLIICKA…MAKNFKAEYT (82 aa)) form the Ig-like C2-type domain. The cysteines at positions 80 and 136 are disulfide-linked.

In terms of assembly, interacts with the non-alpha subunit of nicotinic acetylcholine receptor unc-29 and lev-10 to stabilize the complex formed between unc-29 and lev-10. In terms of tissue distribution, expressed in body wall muscle cells, the pharyngeal muscle cell pm6 and in four head neurons.

It localises to the synapse. It is found in the secreted. Required for the localization of acetylcholine receptors at neuromuscular junctions and for subsequently controlling the response evoked by receptor stimulation. The protein is Immunoglobulin domain-containing protein oig-4 of Caenorhabditis elegans.